The primary structure comprises 479 residues: Catalase A (479 aa).

Polar residues predominate over residues 1 to 21; it reads MSKILTTASGAPVADNQNSRS. Positions 1–25 are disordered; sequence MSKILTTASGAPVADNQNSRSAGPR. Active-site residues include His53 and Asn126. Residue Tyr336 participates in heme binding. Positions 350 to 376 are disordered; the sequence is QLPVNAPRCPVNSYQRDGSMATGSYGS. Over residues 361-376 the composition is skewed to polar residues; sequence NSYQRDGSMATGSYGS.

The protein belongs to the catalase family. Heme serves as cofactor.

It catalyses the reaction 2 H2O2 = O2 + 2 H2O. Its activity is regulated as follows. Activated by peroxide. In terms of biological role, the major expressed catalase protein in strain Corvallis in stationary phase. Decomposes hydrogen peroxide into water and oxygen; serves to protect cells from the toxic effects of hydrogen peroxide. The chain is Catalase A (katA) from Pseudomonas putida (Arthrobacter siderocapsulatus).